The primary structure comprises 88 residues: Large ribosomal subunit protein bL27 (88 aa).

A disordered region spans residues 1 to 26 (MAHKKGTGSTRNGRDSNSKRLGVKAY).

This sequence belongs to the bacterial ribosomal protein bL27 family.

The protein is Large ribosomal subunit protein bL27 of Prochlorococcus marinus (strain MIT 9211).